The primary structure comprises 504 residues: Sucrose phosphorylase (504 aa).

Asp50 is a binding site for substrate. Sucrose-binding positions include His88, 190–192, Glu232, 289–290, 342–345, and Arg399; these read RLD, HD, and DLYQ. Asp192 (nucleophile) is an active-site residue. Glu232 serves as the catalytic Proton donor.

Belongs to the glycosyl hydrolase 13 family. Sucrose phosphorylase subfamily. As to quaternary structure, homodimer.

The catalysed reaction is sucrose + phosphate = D-fructose + alpha-D-glucose 1-phosphate. Catalyzes the reversible phosphorolysis of sucrose into alpha-D-glucose 1-phosphate (Glc1P) and D-fructose. Is involved in sucrose degradation. Also displays transglucosylation activity in vitro, by transferring the glucosyl moiety of Glc1P to a broad range of monomeric sugars, such as D- and L-arabinose, D- and L-arabitol, and xylitol. This chain is Sucrose phosphorylase, found in Bifidobacterium adolescentis (strain ATCC 15703 / DSM 20083 / NCTC 11814 / E194a).